We begin with the raw amino-acid sequence, 151 residues long: 3-hydroxyacyl-[acyl-carrier-protein] dehydratase FabZ (151 aa).

The active site involves His-54.

This sequence belongs to the thioester dehydratase family. FabZ subfamily.

It localises to the cytoplasm. It carries out the reaction a (3R)-hydroxyacyl-[ACP] = a (2E)-enoyl-[ACP] + H2O. In terms of biological role, involved in unsaturated fatty acids biosynthesis. Catalyzes the dehydration of short chain beta-hydroxyacyl-ACPs and long chain saturated and unsaturated beta-hydroxyacyl-ACPs. This is 3-hydroxyacyl-[acyl-carrier-protein] dehydratase FabZ from Cronobacter sakazakii (strain ATCC BAA-894) (Enterobacter sakazakii).